Here is a 184-residue protein sequence, read N- to C-terminus: GTP cyclohydrolase 1 (184 aa).

Residues Cys-74, His-77, and Cys-145 each coordinate Zn(2+).

This sequence belongs to the GTP cyclohydrolase I family. Toroid-shaped homodecamer, composed of two pentamers of five dimers.

It catalyses the reaction GTP + H2O = 7,8-dihydroneopterin 3'-triphosphate + formate + H(+). It functions in the pathway cofactor biosynthesis; 7,8-dihydroneopterin triphosphate biosynthesis; 7,8-dihydroneopterin triphosphate from GTP: step 1/1. The protein is GTP cyclohydrolase 1 (folE) of Aquifex aeolicus (strain VF5).